A 216-amino-acid polypeptide reads, in one-letter code: Large ribosomal subunit protein uL3 (216 aa).

Disordered regions lie at residues 89–108 and 139–158; these read QRAS…VGGF and NTHG…QCQS. Residue glutamine 157 is modified to N5-methylglutamine.

Belongs to the universal ribosomal protein uL3 family. Part of the 50S ribosomal subunit. Forms a cluster with proteins L14 and L19. Methylated by PrmB.

Functionally, one of the primary rRNA binding proteins, it binds directly near the 3'-end of the 23S rRNA, where it nucleates assembly of the 50S subunit. This chain is Large ribosomal subunit protein uL3, found in Halorhodospira halophila (strain DSM 244 / SL1) (Ectothiorhodospira halophila (strain DSM 244 / SL1)).